A 136-amino-acid polypeptide reads, in one-letter code: MQTTGALLISPALIRSCTRGLIRPVSASFLSRPEIPSVQPSYSSGPLQVARREFQTSVVSRDIDTAAKFIGAGAATVGVAGSGAGIGTVFGSLIIGYARNPSLKQQLFSYAILGFALSEAMGLFCLMVAFLILFAM.

The transit peptide at Met-1–Arg-61 directs the protein to the mitochondrion. Residues Val-77 to Tyr-97 traverse the membrane as a helical segment. An N6,N6,N6-trimethyllysine modification is found at Lys-104. The helical transmembrane segment at Ile-112–Ile-132 threads the bilayer.

It belongs to the ATPase C chain family. As to quaternary structure, homooctamer; the c-ring consists of eight c subunits forming a circle, and each subunit adopts a hairpin shape. Component of the ATP synthase complex composed at least of ATP5F1A/subunit alpha, ATP5F1B/subunit beta, ATP5MC1/subunit c (homooctomer), MT-ATP6/subunit a, MT-ATP8/subunit 8, ATP5ME/subunit e, ATP5MF/subunit f, ATP5MG/subunit g, ATP5MK/subunit k, ATP5MJ/subunit j, ATP5F1C/subunit gamma, ATP5F1D/subunit delta, ATP5F1E/subunit epsilon, ATP5PF/subunit F6, ATP5PB/subunit b, ATP5PD/subunit d, ATP5PO/subunit OSCP. ATP synthase complex consists of a soluble F(1) head domain (subunits alpha(3) and beta(3)) - the catalytic core - and a membrane F(0) domain - the membrane proton channel (subunits c, a, 8, e, f, g, k and j). These two domains are linked by a central stalk (subunits gamma, delta, and epsilon) rotating inside the F1 region and a stationary peripheral stalk (subunits F6, b, d, and OSCP). Interacts with TMEM70 (homooligomer form); this interaction facilitates the oligomer formation of subunit c/ATP5MC1 (c-ring) and the c-ring membrane insertion and also protects ATP5MC1 against intramitochondrial proteolysis. Post-translationally, trimethylated by ATPSCKMT at Lys-104. Methylation is required for proper incorporation of the C subunit into the ATP synthase complex and mitochondrial respiration.

It is found in the mitochondrion membrane. It catalyses the reaction H(+)(in) = H(+)(out). Its function is as follows. Subunit c, of the mitochondrial membrane ATP synthase complex (F(1)F(0) ATP synthase or Complex V) that produces ATP from ADP in the presence of a proton gradient across the membrane which is generated by electron transport complexes of the respiratory chain. ATP synthase complex consist of a soluble F(1) head domain - the catalytic core - and a membrane F(1) domain - the membrane proton channel. These two domains are linked by a central stalk rotating inside the F(1) region and a stationary peripheral stalk. During catalysis, ATP synthesis in the catalytic domain of F(1) is coupled via a rotary mechanism of the central stalk subunits to proton translocation. With the subunit a (MT-ATP6), forms the proton-conducting channel in the F(0) domain, that contains two crucial half-channels (inlet and outlet) that facilitate proton movement from the mitochondrial intermembrane space (IMS) into the matrix. Protons are taken up via the inlet half-channel and released through the outlet half-channel, following a Grotthuss mechanism. The protein is ATP synthase F(0) complex subunit C1, mitochondrial of Ovis aries (Sheep).